We begin with the raw amino-acid sequence, 317 residues long: Melanocyte-stimulating hormone receptor (317 aa).

Over 1-37 (MPMQGAQKRLLGSLNSTPTATPNLGLAANHTGAPCLE) the chain is Extracellular. An N-linked (GlcNAc...) asparagine glycan is attached at Asn-29. Residues 38–63 (VSIPDGLFLSLGLVSLVENVLVVAAI) form a helical membrane-spanning segment. At 64–72 (AKNRNLHSP) the chain is on the cytoplasmic side. A helical transmembrane segment spans residues 73–93 (MYCFICCLALSDLLVSSSNML). Topologically, residues 94 to 118 (ETAVILLLEAGALATRASVVQQLQN) are extracellular. A helical membrane pass occupies residues 119–140 (TIDVLTCSSMLCSLCFLGAIAV). Over 141 to 163 (DRHVSIFYALRYHSIMTLARARR) the chain is Cytoplasmic. The chain crosses the membrane as a helical span at residues 164–183 (AIAAIWVASVLSSTLFIAYC). The Extracellular segment spans residues 184-191 (DHAXVLLC). The chain crosses the membrane as a helical span at residues 192–211 (LVVFFLAMLVLMAVLYVHML). At 212–240 (ARACQHAQGITRLHQRQPPAHQGFGFRGA) the chain is on the cytoplasmic side. A helical transmembrane segment spans residues 241 to 266 (ATLTILLGIFFLCWGPFFLHLTLVVL). At 267-279 (CPQHLTCSCIFKN) the chain is on the extracellular side. Residues 280–300 (FKVFLTLIICSTIIDPLIYAF) form a helical membrane-spanning segment. At 301–317 (RSQELRRTLKELLLCSW) the chain is on the cytoplasmic side. The S-palmitoyl cysteine moiety is linked to residue Cys-315.

It belongs to the G-protein coupled receptor 1 family. As to quaternary structure, interacts with MGRN1, but does not undergo MGRN1-mediated ubiquitination; this interaction competes with GNAS-binding and thus inhibits agonist-induced cAMP production. Interacts with OPN3; the interaction results in a decrease in MC1R-mediated cAMP signaling and ultimately a decrease in melanin production in melanocytes.

It localises to the cell membrane. Receptor for MSH (alpha, beta and gamma) and ACTH. The activity of this receptor is mediated by G proteins which activate adenylate cyclase. Mediates melanogenesis, the production of eumelanin (black/brown) and phaeomelanin (red/yellow), via regulation of cAMP signaling in melanocytes. The protein is Melanocyte-stimulating hormone receptor (MC1R) of Ateles paniscus (Black spider monkey).